The primary structure comprises 779 residues: Phosphoribosylformylglycinamidine synthase subunit PurL (779 aa).

His-52 is an active-site residue. Residues Tyr-55 and Lys-94 each contribute to the ATP site. Glu-96 serves as a coordination point for Mg(2+). Substrate-binding positions include Ser-97–His-100 and Arg-119. His-98 serves as the catalytic Proton acceptor. Asp-120 provides a ligand contact to Mg(2+). Residue Gln-243 coordinates substrate. Asp-271 is a binding site for Mg(2+). Glu-315–Gln-317 contributes to the substrate binding site. Residues Asn-523 and Gly-560 each contribute to the ATP site. Asn-561 is a binding site for Mg(2+). Position 563 (Ser-563) interacts with substrate.

It belongs to the FGAMS family. As to quaternary structure, monomer. Part of the FGAM synthase complex composed of 1 PurL, 1 PurQ and 2 PurS subunits.

The protein resides in the cytoplasm. It catalyses the reaction N(2)-formyl-N(1)-(5-phospho-beta-D-ribosyl)glycinamide + L-glutamine + ATP + H2O = 2-formamido-N(1)-(5-O-phospho-beta-D-ribosyl)acetamidine + L-glutamate + ADP + phosphate + H(+). Its pathway is purine metabolism; IMP biosynthesis via de novo pathway; 5-amino-1-(5-phospho-D-ribosyl)imidazole from N(2)-formyl-N(1)-(5-phospho-D-ribosyl)glycinamide: step 1/2. Part of the phosphoribosylformylglycinamidine synthase complex involved in the purines biosynthetic pathway. Catalyzes the ATP-dependent conversion of formylglycinamide ribonucleotide (FGAR) and glutamine to yield formylglycinamidine ribonucleotide (FGAM) and glutamate. The FGAM synthase complex is composed of three subunits. PurQ produces an ammonia molecule by converting glutamine to glutamate. PurL transfers the ammonia molecule to FGAR to form FGAM in an ATP-dependent manner. PurS interacts with PurQ and PurL and is thought to assist in the transfer of the ammonia molecule from PurQ to PurL. This Prochlorococcus marinus (strain AS9601) protein is Phosphoribosylformylglycinamidine synthase subunit PurL.